The following is a 443-amino-acid chain: ATP-dependent protease ATPase subunit HslU (443 aa).

Residues isoleucine 18, 60 to 65 (GVGKTE), aspartate 256, glutamate 321, and arginine 393 each bind ATP.

The protein belongs to the ClpX chaperone family. HslU subfamily. In terms of assembly, a double ring-shaped homohexamer of HslV is capped on each side by a ring-shaped HslU homohexamer. The assembly of the HslU/HslV complex is dependent on binding of ATP.

The protein localises to the cytoplasm. In terms of biological role, ATPase subunit of a proteasome-like degradation complex; this subunit has chaperone activity. The binding of ATP and its subsequent hydrolysis by HslU are essential for unfolding of protein substrates subsequently hydrolyzed by HslV. HslU recognizes the N-terminal part of its protein substrates and unfolds these before they are guided to HslV for hydrolysis. The sequence is that of ATP-dependent protease ATPase subunit HslU from Enterobacter sp. (strain 638).